Consider the following 314-residue polypeptide: MDVIKISPRGYCYGVVDAMVIAKNASLDKSLPRPIYILGMIVHNKHVTDAFEEEGIFTLDGSNRLDILKQVDKGTVIFTAHGVSPEVRRIAEEKGLVAIDATCPDVTKTHNLILEMKEKGYHVIYIGKKGHPEPEGAVGVAPEIVHLVETEEDVKNLDIQSEKLIVTNQTTMSQWDVHDIMELVKEKYPHVEYHQEICLATQVRQEAVSEQAKKADLTIVVGDPKSNNSNRLAQVSEEIAGTKAYRIGDLSELKLEWLKGVNTVAVTAGASTPTPITKEVIRFLEQFDHEDPSTWTTEHNIPLKKILPKVKAKN.

Cys-12 provides a ligand contact to [4Fe-4S] cluster. Positions 43 and 81 each coordinate (2E)-4-hydroxy-3-methylbut-2-enyl diphosphate. Dimethylallyl diphosphate contacts are provided by His-43 and His-81. Positions 43 and 81 each coordinate isopentenyl diphosphate. Residue Cys-103 participates in [4Fe-4S] cluster binding. His-131 provides a ligand contact to (2E)-4-hydroxy-3-methylbut-2-enyl diphosphate. His-131 serves as a coordination point for dimethylallyl diphosphate. His-131 is an isopentenyl diphosphate binding site. Glu-133 (proton donor) is an active-site residue. Thr-170 provides a ligand contact to (2E)-4-hydroxy-3-methylbut-2-enyl diphosphate. Cys-198 serves as a coordination point for [4Fe-4S] cluster. Ser-226, Asn-228, and Ser-271 together coordinate (2E)-4-hydroxy-3-methylbut-2-enyl diphosphate. Dimethylallyl diphosphate contacts are provided by Ser-226, Asn-228, and Ser-271. Isopentenyl diphosphate-binding residues include Ser-226, Asn-228, and Ser-271.

It belongs to the IspH family. [4Fe-4S] cluster serves as cofactor.

It catalyses the reaction isopentenyl diphosphate + 2 oxidized [2Fe-2S]-[ferredoxin] + H2O = (2E)-4-hydroxy-3-methylbut-2-enyl diphosphate + 2 reduced [2Fe-2S]-[ferredoxin] + 2 H(+). The enzyme catalyses dimethylallyl diphosphate + 2 oxidized [2Fe-2S]-[ferredoxin] + H2O = (2E)-4-hydroxy-3-methylbut-2-enyl diphosphate + 2 reduced [2Fe-2S]-[ferredoxin] + 2 H(+). It functions in the pathway isoprenoid biosynthesis; dimethylallyl diphosphate biosynthesis; dimethylallyl diphosphate from (2E)-4-hydroxy-3-methylbutenyl diphosphate: step 1/1. The protein operates within isoprenoid biosynthesis; isopentenyl diphosphate biosynthesis via DXP pathway; isopentenyl diphosphate from 1-deoxy-D-xylulose 5-phosphate: step 6/6. In terms of biological role, catalyzes the conversion of 1-hydroxy-2-methyl-2-(E)-butenyl 4-diphosphate (HMBPP) into a mixture of isopentenyl diphosphate (IPP) and dimethylallyl diphosphate (DMAPP). Acts in the terminal step of the DOXP/MEP pathway for isoprenoid precursor biosynthesis. The sequence is that of 4-hydroxy-3-methylbut-2-enyl diphosphate reductase from Bacillus subtilis (strain 168).